The sequence spans 957 residues: Glycine dehydrogenase (decarboxylating) (957 aa).

Lysine 702 bears the N6-(pyridoxal phosphate)lysine mark.

This sequence belongs to the GcvP family. As to quaternary structure, the glycine cleavage system is composed of four proteins: P, T, L and H. Pyridoxal 5'-phosphate serves as cofactor.

The catalysed reaction is N(6)-[(R)-lipoyl]-L-lysyl-[glycine-cleavage complex H protein] + glycine + H(+) = N(6)-[(R)-S(8)-aminomethyldihydrolipoyl]-L-lysyl-[glycine-cleavage complex H protein] + CO2. Its function is as follows. The glycine cleavage system catalyzes the degradation of glycine. The P protein binds the alpha-amino group of glycine through its pyridoxal phosphate cofactor; CO(2) is released and the remaining methylamine moiety is then transferred to the lipoamide cofactor of the H protein. The chain is Glycine dehydrogenase (decarboxylating) from Synechococcus sp. (strain RCC307).